We begin with the raw amino-acid sequence, 351 residues long: Protein RecA (351 aa).

ATP is bound at residue 64 to 71 (GPESSGKT). Positions 330-351 (DRFLQNGGPDPDDGDGDATAEM) are disordered. The span at 339-351 (DPDDGDGDATAEM) shows a compositional bias: acidic residues.

Belongs to the RecA family.

Its subcellular location is the cytoplasm. In terms of biological role, can catalyze the hydrolysis of ATP in the presence of single-stranded DNA, the ATP-dependent uptake of single-stranded DNA by duplex DNA, and the ATP-dependent hybridization of homologous single-stranded DNAs. It interacts with LexA causing its activation and leading to its autocatalytic cleavage. The sequence is that of Protein RecA from Rhizobium leguminosarum bv. viciae.